The sequence spans 145 residues: Hemoglobin subunit beta (145 aa).

The 145-residue stretch at 1-145 (MLTSEEKAAV…VANALAHRYH (145 aa)) folds into the Globin domain. T11 carries the post-translational modification Phosphothreonine. K58 carries the N6-acetyllysine modification. H62 is a binding site for heme b. K81 carries the N6-acetyllysine modification. H91 provides a ligand contact to heme b. Residue C92 is modified to S-nitrosocysteine.

The protein belongs to the globin family. Heterotetramer of two alpha chains and two beta chains. As to expression, red blood cells.

In terms of biological role, involved in oxygen transport from the lung to the various peripheral tissues. The sequence is that of Hemoglobin subunit beta (HBB) from Rangifer tarandus (Reindeer).